The following is a 132-amino-acid chain: Arsenate reductase 1 (132 aa).

Active-site nucleophile residues include C10, C82, and C89. Intrachain disulfides connect C10/C82 and C82/C89.

Belongs to the low molecular weight phosphotyrosine protein phosphatase family. Thioredoxin-coupled ArsC subfamily.

It is found in the cytoplasm. The catalysed reaction is arsenate + [thioredoxin]-dithiol + H(+) = arsenite + [thioredoxin]-disulfide + H2O. Catalyzes the reduction of arsenate [As(V)] to arsenite [As(III)]. This Staphylococcus epidermidis (strain ATCC 35984 / DSM 28319 / BCRC 17069 / CCUG 31568 / BM 3577 / RP62A) protein is Arsenate reductase 1.